Here is a 272-residue protein sequence, read N- to C-terminus: D-aminoacyl-tRNA deacylase (272 aa).

Belongs to the DtdA deacylase family. In terms of assembly, monomer. The cofactor is Zn(2+).

It carries out the reaction a D-aminoacyl-tRNA + H2O = a tRNA + a D-alpha-amino acid + H(+). The catalysed reaction is glycyl-tRNA(Ala) + H2O = tRNA(Ala) + glycine + H(+). Its function is as follows. D-aminoacyl-tRNA deacylase with broad substrate specificity. By recycling D-aminoacyl-tRNA to D-amino acids and free tRNA molecules, this enzyme counteracts the toxicity associated with the formation of D-aminoacyl-tRNA entities in vivo. In Thermococcus onnurineus (strain NA1), this protein is D-aminoacyl-tRNA deacylase.